The following is a 171-amino-acid chain: Peptide deformylase (171 aa).

Residues cysteine 91 and histidine 133 each contribute to the Fe cation site. The active site involves glutamate 134. A Fe cation-binding site is contributed by histidine 137.

Belongs to the polypeptide deformylase family. Requires Fe(2+) as cofactor.

The enzyme catalyses N-terminal N-formyl-L-methionyl-[peptide] + H2O = N-terminal L-methionyl-[peptide] + formate. Removes the formyl group from the N-terminal Met of newly synthesized proteins. Requires at least a dipeptide for an efficient rate of reaction. N-terminal L-methionine is a prerequisite for activity but the enzyme has broad specificity at other positions. The protein is Peptide deformylase of Sodalis glossinidius (strain morsitans).